Reading from the N-terminus, the 901-residue chain is HTH-type transcriptional regulator MalT (901 aa).

39-46 (SPAGYGKT) is an ATP binding site. The HTH luxR-type domain occupies 829 to 894 (ELIRTSPLTQ…AAVQHAQKLL (66 aa)). Residues 853 to 872 (NEQIAGELEVAATTIKTHIR) constitute a DNA-binding region (H-T-H motif).

Belongs to the MalT family. Monomer in solution. Oligomerizes to an active state in the presence of the positive effectors ATP and maltotriose.

With respect to regulation, activated by ATP and maltotriose, which are both required for DNA binding. In terms of biological role, positively regulates the transcription of the maltose regulon whose gene products are responsible for uptake and catabolism of malto-oligosaccharides. Specifically binds to the promoter region of its target genes, recognizing a short DNA motif called the MalT box. The polypeptide is HTH-type transcriptional regulator MalT (Escherichia coli (strain 55989 / EAEC)).